The following is a 139-amino-acid chain: Putative pre-16S rRNA nuclease (139 aa).

Belongs to the YqgF nuclease family.

It localises to the cytoplasm. Its function is as follows. Could be a nuclease involved in processing of the 5'-end of pre-16S rRNA. This chain is Putative pre-16S rRNA nuclease, found in Thermoanaerobacter pseudethanolicus (strain ATCC 33223 / 39E) (Clostridium thermohydrosulfuricum).